Reading from the N-terminus, the 142-residue chain is Large ribosomal subunit protein uL11 (142 aa).

It belongs to the universal ribosomal protein uL11 family. In terms of assembly, part of the ribosomal stalk of the 50S ribosomal subunit. Interacts with L10 and the large rRNA to form the base of the stalk. L10 forms an elongated spine to which L12 dimers bind in a sequential fashion forming a multimeric L10(L12)X complex. In terms of processing, one or more lysine residues are methylated.

Its function is as follows. Forms part of the ribosomal stalk which helps the ribosome interact with GTP-bound translation factors. The polypeptide is Large ribosomal subunit protein uL11 (Mesorhizobium japonicum (strain LMG 29417 / CECT 9101 / MAFF 303099) (Mesorhizobium loti (strain MAFF 303099))).